We begin with the raw amino-acid sequence, 866 residues long: Glycoprotein gp2 (866 aa).

Positions 1 to 25 are cleaved as a signal peptide; it reads MGFIYARKLLLCMAVSIYAIGSTTT. Disordered regions lie at residues 24 to 185 and 319 to 619; these read TTTE…TDTT and TAAT…IVPQ. Residue Asn-48 is glycosylated (N-linked (GlcNAc...) asparagine; by host). Over residues 319-442 the composition is skewed to low complexity; sequence TAATTTAATT…PDSSTGSTST (124 aa). The span at 443–463 shows a compositional bias: polar residues; that stretch reads AEPSSTFTLTPSTATPSTDQF. Composition is skewed to low complexity over residues 464–499 and 514–526; these read TGSS…EAST and TPDG…NTTP. A glycan (N-linked (GlcNAc...) asparagine; by host) is linked at Asn-518. Residues 535-561 show a composition bias toward polar residues; the sequence is FADTQQTPDNGVSTQHTTINDHTTANA. Positions 564–574 are enriched in basic residues; that stretch reads HAGHHRGRAGG. Asn-611 and Asn-659 each carry an N-linked (GlcNAc...) asparagine; by host glycan. Residues 835 to 855 form a helical membrane-spanning segment; the sequence is FALVAATTLTVTILCLLCCLY.

Its subcellular location is the virion membrane. Its function is as follows. Virulence factor. In Equus caballus (Horse), this protein is Glycoprotein gp2.